Reading from the N-terminus, the 64-residue chain is Small ribosomal subunit protein bS21 (64 aa).

The protein belongs to the bacterial ribosomal protein bS21 family.

The protein is Small ribosomal subunit protein bS21 of Flavobacterium johnsoniae (strain ATCC 17061 / DSM 2064 / JCM 8514 / BCRC 14874 / CCUG 350202 / NBRC 14942 / NCIMB 11054 / UW101) (Cytophaga johnsonae).